The sequence spans 127 residues: Small ribosomal subunit protein uS11 (127 aa).

This sequence belongs to the universal ribosomal protein uS11 family. In terms of assembly, part of the 30S ribosomal subunit. Interacts with proteins S7 and S18. Binds to IF-3.

In terms of biological role, located on the platform of the 30S subunit, it bridges several disparate RNA helices of the 16S rRNA. Forms part of the Shine-Dalgarno cleft in the 70S ribosome. This is Small ribosomal subunit protein uS11 from Streptococcus gordonii (strain Challis / ATCC 35105 / BCRC 15272 / CH1 / DL1 / V288).